A 92-amino-acid chain; its full sequence is Small ribosomal subunit protein bS16 (92 aa).

The protein belongs to the bacterial ribosomal protein bS16 family.

This Desulforudis audaxviator (strain MP104C) protein is Small ribosomal subunit protein bS16.